A 318-amino-acid chain; its full sequence is Ribose-phosphate pyrophosphokinase 1 (318 aa).

An ATP-binding site is contributed by 96–101 (RQDKKD). Residues Asp-128, His-130, Asp-139, and Asp-143 each coordinate Mg(2+). His-130 contributes to the ATP binding site. The binding of phosphoribosylpyrophosphate stretch occupies residues 212-227 (KDRVAILVDDMADTCG).

Belongs to the ribose-phosphate pyrophosphokinase family. Homodimer. The active form is probably a hexamer composed of 3 homodimers. Requires Mg(2+) as cofactor.

The catalysed reaction is D-ribose 5-phosphate + ATP = 5-phospho-alpha-D-ribose 1-diphosphate + AMP + H(+). The protein operates within metabolic intermediate biosynthesis; 5-phospho-alpha-D-ribose 1-diphosphate biosynthesis; 5-phospho-alpha-D-ribose 1-diphosphate from D-ribose 5-phosphate (route I): step 1/1. With respect to regulation, activated by magnesium and inorganic phosphate. Functionally, catalyzes the synthesis of phosphoribosylpyrophosphate (PRPP) that is essential for nucleotide synthesis. The polypeptide is Ribose-phosphate pyrophosphokinase 1 (PRPS1) (Macaca fascicularis (Crab-eating macaque)).